We begin with the raw amino-acid sequence, 231 residues long: tRNA1(Val) (adenine(37)-N6)-methyltransferase (231 aa).

This sequence belongs to the methyltransferase superfamily. tRNA (adenine-N(6)-)-methyltransferase family.

Its subcellular location is the cytoplasm. The catalysed reaction is adenosine(37) in tRNA1(Val) + S-adenosyl-L-methionine = N(6)-methyladenosine(37) in tRNA1(Val) + S-adenosyl-L-homocysteine + H(+). Its function is as follows. Specifically methylates the adenine in position 37 of tRNA(1)(Val) (anticodon cmo5UAC). This is tRNA1(Val) (adenine(37)-N6)-methyltransferase from Flavobacteriaceae bacterium (strain 3519-10).